Consider the following 275-residue polypeptide: MSFLKELFSRYTLHEGQSKSAELAYFFLLSLFPFLIFMLTLTAYLPLSTDDVLGVIEQYAPASAMSLVESITHQTLNNRNGGLLSFGIIAALWSASNGMNAIVRSLNHAYDVEENRSFIIVRLTSIFLTIAMVFTILVALLLPVFGREIGRLASDFVGASDLFLSVWAAIRWGVSPLVLLIVFSALYVIAPNKKLSLRFVMPGAVFATIGWIIVSTLFSFYVSTFANYSATYGSIGGIIVLMIWFYLSGILIILGGEINALLHKRKKLPDENPYH.

The next 6 membrane-spanning stretches (helical) occupy residues 23–43, 83–103, 126–146, 172–192, 199–219, and 235–255; these read LAYF…TLTA, LLSF…NAIV, IFLT…PVFG, WGVS…IAPN, FVMP…TLFS, and IGGI…IILG.

Its subcellular location is the cell membrane. The chain is Putative ribonuclease-like protein YfkH (yfkH) from Bacillus subtilis (strain 168).